The following is a 75-amino-acid chain: uncharacterized protein (75 aa).

The chain crosses the membrane as a helical span at residues V49 to F69.

It is found in the host membrane. This is an uncharacterized protein from Saccharolobus islandicus (Sulfolobus islandicus).